Here is a 31-residue protein sequence, read N- to C-terminus: Jingzhaotoxin F7-15.33 (31 aa).

3 cysteine pairs are disulfide-bonded: Cys-2–Cys-16, Cys-9–Cys-21, and Cys-15–Cys-28.

It belongs to the neurotoxin 10 (Hwtx-1) family. Expressed by the venom gland.

The protein resides in the secreted. In terms of biological role, probable ion channel inhibitor. This is Jingzhaotoxin F7-15.33 from Chilobrachys guangxiensis (Chinese earth tiger tarantula).